The chain runs to 279 residues: Putative pyruvate, phosphate dikinase regulatory protein (279 aa).

ADP is bound at residue 153–160 (GVSRTSKT).

It belongs to the pyruvate, phosphate/water dikinase regulatory protein family. PDRP subfamily.

It carries out the reaction N(tele)-phospho-L-histidyl/L-threonyl-[pyruvate, phosphate dikinase] + ADP = N(tele)-phospho-L-histidyl/O-phospho-L-threonyl-[pyruvate, phosphate dikinase] + AMP + H(+). The enzyme catalyses N(tele)-phospho-L-histidyl/O-phospho-L-threonyl-[pyruvate, phosphate dikinase] + phosphate + H(+) = N(tele)-phospho-L-histidyl/L-threonyl-[pyruvate, phosphate dikinase] + diphosphate. In terms of biological role, bifunctional serine/threonine kinase and phosphorylase involved in the regulation of the pyruvate, phosphate dikinase (PPDK) by catalyzing its phosphorylation/dephosphorylation. The chain is Putative pyruvate, phosphate dikinase regulatory protein from Rhodopseudomonas palustris (strain HaA2).